A 499-amino-acid polypeptide reads, in one-letter code: Nucleoside transporter 2 (499 aa).

At 1 to 30 (MTGQSAAVEGSNSALPWYRMGFHTLAEFNT) the chain is on the cytoplasmic side. 5 helical membrane-spanning segments follow: residues 31–51 (YVTF…VTSA), 112–132 (LFLG…VPAA), 133–153 (TIPT…MGGL), 179–199 (WGLT…QVSM), and 212–232 (IYFG…VLLR). The segment covering 255 to 267 (VEPEESQDSKEPA) has biased composition (basic and acidic residues). The interval 255 to 276 (VEPEESQDSKEPATGDVAEAPK) is disordered. An N-linked (GlcNAc...) asparagine glycan is attached at Asn326. Transmembrane regions (helical) follow at residues 350 to 370 (LCAF…FFLV), 378 to 398 (MTII…LLMI), 406 to 426 (KLVI…VLCV), 428 to 448 (GFIP…LTNG), and 475 to 495 (MLAG…SLAI).

It belongs to the SLC29A/ENT transporter (TC 2.A.57) family.

Its subcellular location is the cell membrane. The protein localises to the cell projection. It is found in the cilium. The protein resides in the flagellum. The catalysed reaction is inosine(in) + H(+)(in) = inosine(out) + H(+)(out). The enzyme catalyses guanosine(in) + H(+)(in) = guanosine(out) + H(+)(out). It carries out the reaction xanthosine(in) + H(+)(in) = xanthosine(out) + H(+)(out). Functionally, high affinity nucleoside:H(+) symporter; transports inosine and guanosine. Can transport xanthosine. This Leishmania donovani protein is Nucleoside transporter 2.